The sequence spans 191 residues: uncharacterized protein (191 aa).

Residues 1–22 (MKSLRLMLCAMPLMLTGCSTMS) form the signal peptide.

This is an uncharacterized protein from Escherichia coli (strain K12).